A 146-amino-acid polypeptide reads, in one-letter code: Hemoglobin subunit beta (146 aa).

Val-1 carries the post-translational modification N-acetylvaline. Positions 2-146 constitute a Globin domain; the sequence is HLTADEKAAV…VANALAHKYH (145 aa). Phosphothreonine is present on Thr-12. Ser-44 bears the Phosphoserine mark. An N6-acetyllysine modification is found at Lys-59. Residue His-63 coordinates heme b. The residue at position 82 (Lys-82) is an N6-acetyllysine. Position 92 (His-92) interacts with heme b. An S-nitrosocysteine modification is found at Cys-93. Lys-144 carries the post-translational modification N6-acetyllysine.

It belongs to the globin family. Heterotetramer of two alpha chains and two beta chains. In terms of tissue distribution, red blood cells.

In terms of biological role, involved in oxygen transport from the lung to the various peripheral tissues. The sequence is that of Hemoglobin subunit beta (HBB) from Odobenus rosmarus divergens (Pacific walrus).